Here is a 37-residue protein sequence, read N- to C-terminus: Large ribosomal subunit protein bL36 (37 aa).

The protein belongs to the bacterial ribosomal protein bL36 family.

The protein is Large ribosomal subunit protein bL36 of Ureaplasma parvum serovar 3 (strain ATCC 27815 / 27 / NCTC 11736).